Reading from the N-terminus, the 230-residue chain is Leucyl/phenylalanyl-tRNA--protein transferase (230 aa).

It belongs to the L/F-transferase family.

It localises to the cytoplasm. The catalysed reaction is N-terminal L-lysyl-[protein] + L-leucyl-tRNA(Leu) = N-terminal L-leucyl-L-lysyl-[protein] + tRNA(Leu) + H(+). It catalyses the reaction N-terminal L-arginyl-[protein] + L-leucyl-tRNA(Leu) = N-terminal L-leucyl-L-arginyl-[protein] + tRNA(Leu) + H(+). It carries out the reaction L-phenylalanyl-tRNA(Phe) + an N-terminal L-alpha-aminoacyl-[protein] = an N-terminal L-phenylalanyl-L-alpha-aminoacyl-[protein] + tRNA(Phe). Its function is as follows. Functions in the N-end rule pathway of protein degradation where it conjugates Leu, Phe and, less efficiently, Met from aminoacyl-tRNAs to the N-termini of proteins containing an N-terminal arginine or lysine. This Hamiltonella defensa subsp. Acyrthosiphon pisum (strain 5AT) protein is Leucyl/phenylalanyl-tRNA--protein transferase.